A 734-amino-acid chain; its full sequence is Origin of replication complex subunit 3 (734 aa).

2 disordered regions span residues 1–25 (MAPSGTVADPPQCSTTDSFNSSDTA) and 532–554 (GQRQGLPNSPKKHASRSNSKLEK). Polar residues predominate over residues 12 to 24 (QCSTTDSFNSSDT).

The protein belongs to the ORC3 family. Component of the origin recognition complex (ORC) composed of at least ORC1 (ORC1A or ORC1B), ORC2, ORC3, ORC4, ORC5 and ORC6. ORC is regulated in a cell-cycle and development dependent manner. It is sequentially assembled at the exit from anaphase of mitosis and disassembled as cells enter S phase. Interacts directly with ORC1A, ORC2, ORC4, ORC5 and ORC6. Follow a cell-cycle regulation with a peak at the G1/S-phase. Mostly expressed in siliques and flowers, and, to a lower exent, in flower buds, leaves, roots and stems.

The protein resides in the nucleus. Component of the origin recognition complex (ORC) that binds origins of replication. DNA-binding is ATP-dependent. The specific DNA sequences that define origins of replication have not been identified yet. The protein is Origin of replication complex subunit 3 of Arabidopsis thaliana (Mouse-ear cress).